Consider the following 366-residue polypeptide: GTPase Obg (366 aa).

The region spanning 1–162 (MRFVDEATIN…RRLRLELKIL (162 aa)) is the Obg domain. Positions 163-335 (ADAGLLGLPN…VVDAMWRLRD (173 aa)) constitute an OBG-type G domain. GTP contacts are provided by residues 169–176 (GLPNAGKS), 194–198 (FTTLT), 218–221 (DIPG), 288–291 (NKID), and 316–318 (SAM). Mg(2+)-binding residues include Ser-176 and Thr-196.

Belongs to the TRAFAC class OBG-HflX-like GTPase superfamily. OBG GTPase family. Monomer. Mg(2+) serves as cofactor.

It is found in the cytoplasm. In terms of biological role, an essential GTPase which binds GTP, GDP and possibly (p)ppGpp with moderate affinity, with high nucleotide exchange rates and a fairly low GTP hydrolysis rate. Plays a role in control of the cell cycle, stress response, ribosome biogenesis and in those bacteria that undergo differentiation, in morphogenesis control. In Nitratidesulfovibrio vulgaris (strain ATCC 29579 / DSM 644 / CCUG 34227 / NCIMB 8303 / VKM B-1760 / Hildenborough) (Desulfovibrio vulgaris), this protein is GTPase Obg.